A 206-amino-acid chain; its full sequence is 2,3-bisphosphoglycerate-dependent phosphoglycerate mutase (206 aa).

Residues 9–16, 22–23, arginine 61, 88–91, lysine 99, 115–116, and 159–160 each bind substrate; these read RHGQSEWN, TG, ERDY, RR, and GN. The Tele-phosphohistidine intermediate role is filled by histidine 10. Catalysis depends on glutamate 88, which acts as the Proton donor/acceptor.

This sequence belongs to the phosphoglycerate mutase family. BPG-dependent PGAM subfamily. Homodimer.

It catalyses the reaction (2R)-2-phosphoglycerate = (2R)-3-phosphoglycerate. Its pathway is carbohydrate degradation; glycolysis; pyruvate from D-glyceraldehyde 3-phosphate: step 3/5. Its function is as follows. Catalyzes the interconversion of 2-phosphoglycerate and 3-phosphoglycerate. The polypeptide is 2,3-bisphosphoglycerate-dependent phosphoglycerate mutase (Azorhizobium caulinodans (strain ATCC 43989 / DSM 5975 / JCM 20966 / LMG 6465 / NBRC 14845 / NCIMB 13405 / ORS 571)).